Consider the following 360-residue polypeptide: 3-isopropylmalate dehydrogenase (360 aa).

Residue G76–E89 participates in NAD(+) binding. Substrate-binding residues include R96, R106, R134, and D224. Residues D224, D248, and D252 each contribute to the Mg(2+) site. G282–N294 serves as a coordination point for NAD(+).

The protein belongs to the isocitrate and isopropylmalate dehydrogenases family. LeuB type 1 subfamily. As to quaternary structure, homodimer. Mg(2+) serves as cofactor. It depends on Mn(2+) as a cofactor.

The protein localises to the cytoplasm. The catalysed reaction is (2R,3S)-3-isopropylmalate + NAD(+) = 4-methyl-2-oxopentanoate + CO2 + NADH. It participates in amino-acid biosynthesis; L-leucine biosynthesis; L-leucine from 3-methyl-2-oxobutanoate: step 3/4. Catalyzes the oxidation of 3-carboxy-2-hydroxy-4-methylpentanoate (3-isopropylmalate) to 3-carboxy-4-methyl-2-oxopentanoate. The product decarboxylates to 4-methyl-2 oxopentanoate. This chain is 3-isopropylmalate dehydrogenase, found in Pseudomonas putida (strain ATCC 47054 / DSM 6125 / CFBP 8728 / NCIMB 11950 / KT2440).